The sequence spans 718 residues: Acetolactate synthase, mitochondrial (718 aa).

2 disordered regions span residues 1-50 (MLTR…APVY) and 72-101 (RKIQ…APQP). Positions 32-45 (RYSNNIHTSSTQNA) are enriched in polar residues. Residues 76-99 (SSASTAAASPAVRPQPAQHFQAAP) show a composition bias toward low complexity. Glu-173 provides a ligand contact to thiamine diphosphate. Arg-275 is an FAD binding site. Positions 296–327 (IPAKSAQPGHSPYLPSNPLNPSSQPSDPLPGD) are disordered. A compositionally biased stretch (low complexity) spans 306–325 (SPYLPSNPLNPSSQPSDPLP). FAD-binding positions include 397–418 (HGSA…LGVR) and 449–468 (EIQP…VLGD). The segment at 541–621 (QHQMWACQYY…VKVLLFNNEF (81 aa)) is thiamine pyrophosphate binding. Positions 592 and 619 each coordinate Mg(2+).

It belongs to the TPP enzyme family. Mg(2+) is required as a cofactor. It depends on thiamine diphosphate as a cofactor.

The protein localises to the mitochondrion. It catalyses the reaction 2 pyruvate + H(+) = (2S)-2-acetolactate + CO2. Its pathway is amino-acid biosynthesis; L-isoleucine biosynthesis; L-isoleucine from 2-oxobutanoate: step 1/4. It functions in the pathway amino-acid biosynthesis; L-valine biosynthesis; L-valine from pyruvate: step 1/4. The sequence is that of Acetolactate synthase, mitochondrial (ILV2) from Cryptococcus neoformans var. neoformans serotype D (strain JEC21 / ATCC MYA-565) (Filobasidiella neoformans).